Here is a 381-residue protein sequence, read N- to C-terminus: Cytochrome b (381 aa).

A run of 4 helical transmembrane segments spans residues 33–53, 77–98, 113–133, and 178–198; these read FGSLLGICLIIQILTGLFLAM, WLLRNLHANGASMFFMCLFLHV, WNIGVILLLTVMATAFVGYVL, and FFAFHFILPFIIVAFAAVHLL. Heme b is bound by residues histidine 83 and histidine 97. Residues histidine 182 and histidine 196 each coordinate heme b. Histidine 201 contacts a ubiquinone. The next 4 helical transmembrane spans lie at 226 to 246, 288 to 308, 320 to 340, and 347 to 367; these read IKDALGLIFLILSLLLLGLFS, LGGVLALLASILILLIIPLLH, IFQTLFWILTADLITLTWIGG, and FIIIGQLALMLYFLLILALMP.

It belongs to the cytochrome b family. The cytochrome bc1 complex contains 11 subunits: 3 respiratory subunits (MT-CYB, CYC1 and UQCRFS1), 2 core proteins (UQCRC1 and UQCRC2) and 6 low-molecular weight proteins (UQCRH/QCR6, UQCRB/QCR7, UQCRQ/QCR8, UQCR10/QCR9, UQCR11/QCR10 and a cleavage product of UQCRFS1). This cytochrome bc1 complex then forms a dimer. It depends on heme b as a cofactor.

The protein localises to the mitochondrion inner membrane. In terms of biological role, component of the ubiquinol-cytochrome c reductase complex (complex III or cytochrome b-c1 complex) that is part of the mitochondrial respiratory chain. The b-c1 complex mediates electron transfer from ubiquinol to cytochrome c. Contributes to the generation of a proton gradient across the mitochondrial membrane that is then used for ATP synthesis. The chain is Cytochrome b (MT-CYB) from Dasykaluta rosamondae (Little red marsupial mouse).